Consider the following 366-residue polypeptide: Inactive protein RESTRICTED TEV MOVEMENT 2 (366 aa).

One can recognise a sHSP domain in the interval 14 to 121; it reads VQYEDFVPKS…LPETSRTEAA (108 aa). One copy of the A-1 repeat lies at 129 to 133; it reads LEEKR. Residues 129–220 are 6 X 5 AA repeats A of L-E-E-[SKR]-[ERK]; that stretch reads LEEKRLLEES…LEERRLEERK (92 aa). The stretch at 135–139 is one A-2 repeat; that stretch reads LEESR. The A-3 repeat unit spans residues 156-160; sequence LEEKE. Residues 163 to 176 form a B-1 repeat; it reads IRKLQEEAKAKEEA. The segment at 163 to 206 is 3 X 14 AA repeats B of [IMA]-[RK]-K-L-Q-E-E-A-K-A-K-E-[EK]-[LA]; sequence IRKLQEEAKAKEEAEMRKLQEEAKANEEAAAKKLQEEIEAKEKL. The B-2 repeat unit spans residues 178–191; that stretch reads MRKLQEEAKANEEA. The stretch at 193-205 is one B-3 repeat; that stretch reads AKKLQEEIEAKEK. Residues 206–210 form an A-4 repeat; it reads LEERK. An A-5 repeat occupies 211–215; it reads LEERR. One copy of the A-6 repeat lies at 216–220; the sequence is LEERK. Residues 322 to 342 form a helical membrane-spanning segment; sequence LMMNVGVAALVIFALGAYVSY. The disordered stretch occupies residues 345–366; it reads CSSSSSSSSSSPSSSSSSTKPE. The span at 346–366 shows a compositional bias: low complexity; sequence SSSSSSSSSSPSSSSSSTKPE.

It belongs to the small heat shock protein (HSP20) family.

It localises to the cell membrane. Its function is as follows. Seems to not be involved in heat resistance. Unable to mediate restriction of long-distance movement of the pathogenic tobacco etch virus (TEV) without causing a hypersensitive response or inducing systemic acquired resistance. This chain is Inactive protein RESTRICTED TEV MOVEMENT 2 (RTM2), found in Arabidopsis thaliana (Mouse-ear cress).